A 428-amino-acid chain; its full sequence is MIDPKLLRGDLTDLQQQLATRGYTLDIAFWQNIENERKSLQVKTEELQSRRNTGAKQVGVLKKSGEDASELLAEMQSVSGEIKTAEDELRTLQERISQAAMQIPNIPAADVPVGTSEDDNVEVRKWGTPREFDFEIKDHTHIGETLGMLDFEAATKLTGSRFNVLKGQLAQMHRALIQFMLNTHTIKYGYTETYVPYIVNSESLKGTGQLPKFEDDLFKLTNHTNNDDMDFYLIPTAEVPMTNLVRGERLDIKELPLKFTAHTPCFRSEAGSHGRDTRGLIRQHQFEKVEMVNIATAEQSDELLEAMTGQAEFILQQLNLPYRTVKLCTGDMGFAAQKTYDIEVWLPSQETYREISSCSNCGDFQARRMGTRVKDGKQTSLAHTLNGSGLAVGRTLLAVMENHQNADGSITIPEVLRPFMGGADIILL.

236–238 (TAE) provides a ligand contact to L-serine. Residue 267–269 (RSE) coordinates ATP. Glu-290 is an L-serine binding site. 354–357 (EISS) is an ATP binding site. Ser-388 lines the L-serine pocket.

It belongs to the class-II aminoacyl-tRNA synthetase family. Type-1 seryl-tRNA synthetase subfamily. As to quaternary structure, homodimer. The tRNA molecule binds across the dimer.

The protein resides in the cytoplasm. The catalysed reaction is tRNA(Ser) + L-serine + ATP = L-seryl-tRNA(Ser) + AMP + diphosphate + H(+). It catalyses the reaction tRNA(Sec) + L-serine + ATP = L-seryl-tRNA(Sec) + AMP + diphosphate + H(+). The protein operates within aminoacyl-tRNA biosynthesis; selenocysteinyl-tRNA(Sec) biosynthesis; L-seryl-tRNA(Sec) from L-serine and tRNA(Sec): step 1/1. Catalyzes the attachment of serine to tRNA(Ser). Is also able to aminoacylate tRNA(Sec) with serine, to form the misacylated tRNA L-seryl-tRNA(Sec), which will be further converted into selenocysteinyl-tRNA(Sec). This chain is Serine--tRNA ligase, found in Psychrobacter cryohalolentis (strain ATCC BAA-1226 / DSM 17306 / VKM B-2378 / K5).